The following is a 360-amino-acid chain: D-alanine--D-alanine ligase (360 aa).

The ATP-grasp domain occupies 146 to 352 (KLCAVQAGIH…FTELIDRLVR (207 aa)). 179–234 (KKRFAPPFFVKPANLGSSVGIAKIHSFDELENALDEACRLDVKILVEKAIEGREVE) contributes to the ATP binding site. Mg(2+) contacts are provided by Asp305, Glu319, and Asn321.

It belongs to the D-alanine--D-alanine ligase family. Mg(2+) serves as cofactor. The cofactor is Mn(2+).

The protein localises to the cytoplasm. It catalyses the reaction 2 D-alanine + ATP = D-alanyl-D-alanine + ADP + phosphate + H(+). It participates in cell wall biogenesis; peptidoglycan biosynthesis. Cell wall formation. The chain is D-alanine--D-alanine ligase from Chlorobium phaeobacteroides (strain BS1).